Reading from the N-terminus, the 639-residue chain is 1-deoxy-D-xylulose-5-phosphate synthase (639 aa).

Thiamine diphosphate-binding positions include H79 and 120 to 122 (GHS). D151 serves as a coordination point for Mg(2+). Thiamine diphosphate contacts are provided by residues 152-153 (GG), N180, Y288, and E370. N180 is a Mg(2+) binding site.

Belongs to the transketolase family. DXPS subfamily. As to quaternary structure, homodimer. Mg(2+) serves as cofactor. Requires thiamine diphosphate as cofactor.

It carries out the reaction D-glyceraldehyde 3-phosphate + pyruvate + H(+) = 1-deoxy-D-xylulose 5-phosphate + CO2. The protein operates within metabolic intermediate biosynthesis; 1-deoxy-D-xylulose 5-phosphate biosynthesis; 1-deoxy-D-xylulose 5-phosphate from D-glyceraldehyde 3-phosphate and pyruvate: step 1/1. Functionally, catalyzes the acyloin condensation reaction between C atoms 2 and 3 of pyruvate and glyceraldehyde 3-phosphate to yield 1-deoxy-D-xylulose-5-phosphate (DXP). The protein is 1-deoxy-D-xylulose-5-phosphate synthase of Methylococcus capsulatus (strain ATCC 33009 / NCIMB 11132 / Bath).